Here is a 193-residue protein sequence, read N- to C-terminus: Probable chorismate pyruvate-lyase (193 aa).

Positions 81, 119, and 177 each coordinate substrate.

It belongs to the UbiC family.

Its subcellular location is the cytoplasm. The catalysed reaction is chorismate = 4-hydroxybenzoate + pyruvate. It participates in cofactor biosynthesis; ubiquinone biosynthesis. Removes the pyruvyl group from chorismate, with concomitant aromatization of the ring, to provide 4-hydroxybenzoate (4HB) for the ubiquinone pathway. The sequence is that of Probable chorismate pyruvate-lyase from Idiomarina loihiensis (strain ATCC BAA-735 / DSM 15497 / L2-TR).